The sequence spans 417 residues: Ribulose bisphosphate carboxylase large chain (417 aa).

The substrate site is built by Asn-103 and Thr-153. Lys-155 functions as the Proton acceptor in the catalytic mechanism. Position 157 (Lys-157) interacts with substrate. Mg(2+) contacts are provided by Lys-181, Asp-183, and Glu-184. N6-carboxylysine is present on Lys-181. The Proton acceptor role is filled by His-274. The substrate site is built by Arg-275, His-307, and Ser-359.

This sequence belongs to the RuBisCO large chain family. Type I subfamily. Heterohexadecamer of 8 large chains and 8 small chains. Requires Mg(2+) as cofactor.

It localises to the plastid. The protein resides in the chloroplast. The catalysed reaction is 2 (2R)-3-phosphoglycerate + 2 H(+) = D-ribulose 1,5-bisphosphate + CO2 + H2O. It catalyses the reaction D-ribulose 1,5-bisphosphate + O2 = 2-phosphoglycolate + (2R)-3-phosphoglycerate + 2 H(+). In terms of biological role, ruBisCO catalyzes two reactions: the carboxylation of D-ribulose 1,5-bisphosphate, the primary event in carbon dioxide fixation, as well as the oxidative fragmentation of the pentose substrate in the photorespiration process. Both reactions occur simultaneously and in competition at the same active site. This chain is Ribulose bisphosphate carboxylase large chain, found in Acrostichum aureum (Golden leather fern).